Consider the following 217-residue polypeptide: Peptide methionine sulfoxide reductase MsrA (217 aa).

Residue Cys56 is part of the active site.

It belongs to the MsrA Met sulfoxide reductase family.

It catalyses the reaction L-methionyl-[protein] + [thioredoxin]-disulfide + H2O = L-methionyl-(S)-S-oxide-[protein] + [thioredoxin]-dithiol. The enzyme catalyses [thioredoxin]-disulfide + L-methionine + H2O = L-methionine (S)-S-oxide + [thioredoxin]-dithiol. Has an important function as a repair enzyme for proteins that have been inactivated by oxidation. Catalyzes the reversible oxidation-reduction of methionine sulfoxide in proteins to methionine. The chain is Peptide methionine sulfoxide reductase MsrA from Rippkaea orientalis (strain PCC 8801 / RF-1) (Cyanothece sp. (strain PCC 8801)).